Here is a 395-residue protein sequence, read N- to C-terminus: Inactive serine protease 54 (395 aa).

The first 30 residues, 1-30 (MVSAAGLSGDGKMRGVLLVLLGLLYSSTSC), serve as a signal peptide directing secretion. A Peptidase S1 domain is found at 37–269 (VFYGPDPKEG…YSKWITSKAE (233 aa)). A glycan (N-linked (GlcNAc...) asparagine) is linked at asparagine 123. 3 disulfides stabilise this stretch: cysteine 164/cysteine 227, cysteine 195/cysteine 205, and cysteine 217/cysteine 248. The segment at 324-348 (RLGNSSRDSLDVREKDVKESGRSPE) is disordered. An N-linked (GlcNAc...) asparagine glycan is attached at asparagine 327. Residues 331–345 (DSLDVREKDVKESGR) are compositionally biased toward basic and acidic residues.

It belongs to the peptidase S1 family. Plasma kallikrein subfamily.

It is found in the secreted. The polypeptide is Inactive serine protease 54 (PRSS54) (Homo sapiens (Human)).